The chain runs to 386 residues: Succinate--CoA ligase [ADP-forming] subunit beta (386 aa).

The ATP-grasp domain maps to 9–244 (KAVLRSYGVS…LEEEDSKEIE (236 aa)). ATP contacts are provided by residues K46, 53–55 (GRG), E99, C102, and E107. Mg(2+) contacts are provided by N199 and D213. Substrate is bound by residues N264 and 321–323 (GIM).

It belongs to the succinate/malate CoA ligase beta subunit family. In terms of assembly, heterotetramer of two alpha and two beta subunits. Mg(2+) is required as a cofactor.

The enzyme catalyses succinate + ATP + CoA = succinyl-CoA + ADP + phosphate. It catalyses the reaction GTP + succinate + CoA = succinyl-CoA + GDP + phosphate. The protein operates within carbohydrate metabolism; tricarboxylic acid cycle; succinate from succinyl-CoA (ligase route): step 1/1. Functionally, succinyl-CoA synthetase functions in the citric acid cycle (TCA), coupling the hydrolysis of succinyl-CoA to the synthesis of either ATP or GTP and thus represents the only step of substrate-level phosphorylation in the TCA. The beta subunit provides nucleotide specificity of the enzyme and binds the substrate succinate, while the binding sites for coenzyme A and phosphate are found in the alpha subunit. This chain is Succinate--CoA ligase [ADP-forming] subunit beta, found in Bacillus mycoides (strain KBAB4) (Bacillus weihenstephanensis).